The primary structure comprises 154 residues: Ribonuclease H (154 aa).

One can recognise an RNase H type-1 domain in the interval 1 to 141 (MKRIEAYTDG…ADELAREGME (141 aa)). Residues Asp-9, Glu-47, Asp-69, and Asp-133 each coordinate Mg(2+).

It belongs to the RNase H family. Monomer. Mg(2+) is required as a cofactor.

It localises to the cytoplasm. It carries out the reaction Endonucleolytic cleavage to 5'-phosphomonoester.. Its function is as follows. Endonuclease that specifically degrades the RNA of RNA-DNA hybrids. The chain is Ribonuclease H from Brucella anthropi (strain ATCC 49188 / DSM 6882 / CCUG 24695 / JCM 21032 / LMG 3331 / NBRC 15819 / NCTC 12168 / Alc 37) (Ochrobactrum anthropi).